Consider the following 339-residue polypeptide: Trace amine-associated receptor 1 (339 aa).

The Extracellular portion of the chain corresponds to M1–A24. Disulfide bonds link C5–C178, C13–C88, and C96–C182. 2 N-linked (GlcNAc...) asparagine glycosylation sites follow: N10 and N17. Residues S25–S49 traverse the membrane as a helical segment. Over H50–N59 the chain is Cytoplasmic. The chain crosses the membrane as a helical span at residues W60–M81. At V82–C96 the chain is on the extracellular side. Residues K97 to I119 traverse the membrane as a helical segment. Position 103 (D103) interacts with 2-phenylethylamine. The Cytoplasmic segment spans residues D120–V139. Residues I140–L161 traverse the membrane as a helical segment. Topologically, residues E162 to K188 are extracellular. Residues H175–F186 form an extracellular Loop 2 (ECL2) region. The helical transmembrane segment at I189 to Y211 threads the bilayer. At R212–A249 the chain is on the cytoplasmic side. Residues V250–M273 form a helical membrane-spanning segment. Topologically, residues D274 to N286 are extracellular. A helical membrane pass occupies residues D287–F307. The Cytoplasmic portion of the chain corresponds to Y308–S339.

This sequence belongs to the G-protein coupled receptor 1 family. As to expression, expressed at low level in both the central and peripheral nervous system. Moderately expressed in stomach. Low levels in amygdala, kidney, and lung, and small intestine. Trace amounts in cerebellum, dorsal root ganglia, hippocampus, hypothalamus, liver, medulla, pancreas, pituitary, pontine reticular formation, prostate, skeletal muscle and spleen.

The protein localises to the endomembrane system. It is found in the endoplasmic reticulum membrane. It localises to the cell membrane. With respect to regulation, activated by SEP-363856 small molecule: IHCH-7179 acts both as an agonist activator for HTR1A and TAAR1. Intracellular G-protein coupled receptor for trace amines, which recognizes endogenous amine-containing metabolites such as beta-phenylethylamine (beta-PEA), 3-iodothyronamine (T1AM), isoamylamine (IAA), cadaverine (CAD), cyclohexylamine (CHA), p-tyramine (p-TYR), trimethylamine (TMA), octopamine and tryptamine. Also functions as a receptor for various drugs and psychoactive substances, such as amphetamine and methamphetamine. Unresponsive to classical biogenic amines, such as epinephrine and histamine and only partially activated by dopamine and serotonin. Expressed in both the central and peripheral nervous system: TAAR1 activation regulates the activity of several neurotransmitter signaling pathways by (1) decreasing the basal firing rates of the neurons involved and by (2) lowering the sensitivity of receptors to neurotransmitters. Ligand binding causes a conformation change that triggers signaling via guanine nucleotide-binding proteins (G proteins) and modulates the activity of downstream effectors. TAAR1 is coupled with different G(i)/G(o)-, G(s)- or G(q)/G(11) classes of G alpha proteins depending on the ligand. CAD-binding is coupled to G(i)/G(o) G alpha proteins and mediates inhibition of adenylate cyclase activity. T1AM- or beta-PEA-binding is coupled to G(s) G alpha proteins and mediates activation of adenylate cyclase activity. CHA- or IAA-binding is coupled to G(q)/G(11) G alpha proteins and activates phospholipase C-beta, releasing diacylglycerol (DAG) and inositol 1,4,5-trisphosphate (IP3) second messengers. TMA-binding is coupled with all three G(i)/G(o)-, G(s)- or G(q)/G(11) G alpha protein subtypes. Amphetamine-binding is coupled with G(s)- or G(12)/G(13) G alpha protein subtypes. The polypeptide is Trace amine-associated receptor 1 (Homo sapiens (Human)).